Consider the following 93-residue polypeptide: MKQTMDKPKRSFRRHLKPIRRHLKPIRRHLSPIRSGDRIDYKNMSLISRFISEQGKILSGRVNRLTSKQQRLMTNAIKRARILSLLPFLYNEN.

It belongs to the bacterial ribosomal protein bS18 family. As to quaternary structure, part of the 30S ribosomal subunit.

It is found in the plastid. The protein resides in the chloroplast. This is Small ribosomal subunit protein bS18c from Pinus koraiensis (Korean pine).